A 324-amino-acid polypeptide reads, in one-letter code: NAD(P)H-dependent D-xylose reductase xyl1 (324 aa).

The active-site Proton donor is Tyr-50. His-112 lines the substrate pocket. Residues 168-169, 217-226, and 273-283 contribute to the NAD(+) site; these read SN, SSFGPTGFME, and KTSRPEVMAQN.

Belongs to the aldo/keto reductase family.

It carries out the reaction an alditol + NAD(+) = an aldose + NADH + H(+). It catalyses the reaction an alditol + NADP(+) = an aldose + NADPH + H(+). The catalysed reaction is xylitol + NAD(+) = D-xylose + NADH + H(+). The enzyme catalyses xylitol + NADP(+) = D-xylose + NADPH + H(+). It functions in the pathway carbohydrate metabolism; D-xylose degradation. It participates in carbohydrate degradation; L-arabinose degradation via L-arabinitol; D-xylulose 5-phosphate from L-arabinose (fungal route): step 1/5. Functionally, catalyzes the initial reaction in the xylose utilization pathway by reducing D-xylose into xylitol. Xylose is a major component of hemicelluloses such as xylan. Most fungi utilize D-xylose via three enzymatic reactions, xylose reductase (XR), xylitol dehydrogenase (XDH), and xylulokinase, to form xylulose 5-phosphate, which enters pentose phosphate pathway. Also major aldose reductase in pentose and D-galactose catabolism. Reduces the pentose L-arabinose and the hexose D-galactose to their respective polyols. Responsible for extracellular beta-galactosidase formation and cellulase induction during growth on lactose. The protein is NAD(P)H-dependent D-xylose reductase xyl1 (xyl1) of Hypocrea jecorina (Trichoderma reesei).